Consider the following 664-residue polypeptide: DNA topoisomerase 4 subunit B (664 aa).

Residues Tyr-7, Asn-47, Asp-74, 114–120 (GLHGVGA), and Lys-341 contribute to the ATP site. The segment at 386–418 (REAARKAREDARSGKKNKRKDTLLSGKLTPAQS) is disordered. Residues 387–398 (EAARKAREDARS) are compositionally biased toward basic and acidic residues. The Toprim domain maps to 424-538 (NELYLVEGDS…AGRVFIALPP (115 aa)). The Mg(2+) site is built by Glu-430, Asp-503, and Asp-505.

It belongs to the type II topoisomerase family. ParE type 2 subfamily. Heterotetramer composed of ParC and ParE. The cofactor is Mg(2+). Requires Mn(2+) as cofactor. It depends on Ca(2+) as a cofactor.

It catalyses the reaction ATP-dependent breakage, passage and rejoining of double-stranded DNA.. Topoisomerase IV is essential for chromosome segregation. It relaxes supercoiled DNA. Performs the decatenation events required during the replication of a circular DNA molecule. In Staphylococcus epidermidis (strain ATCC 35984 / DSM 28319 / BCRC 17069 / CCUG 31568 / BM 3577 / RP62A), this protein is DNA topoisomerase 4 subunit B.